A 225-amino-acid polypeptide reads, in one-letter code: NAD(P)H-quinone oxidoreductase subunit K, chloroplastic (225 aa).

Cys43, Cys44, Cys108, and Cys139 together coordinate [4Fe-4S] cluster.

Belongs to the complex I 20 kDa subunit family. As to quaternary structure, NDH is composed of at least 16 different subunits, 5 of which are encoded in the nucleus. It depends on [4Fe-4S] cluster as a cofactor.

Its subcellular location is the plastid. The protein resides in the chloroplast thylakoid membrane. The enzyme catalyses a plastoquinone + NADH + (n+1) H(+)(in) = a plastoquinol + NAD(+) + n H(+)(out). The catalysed reaction is a plastoquinone + NADPH + (n+1) H(+)(in) = a plastoquinol + NADP(+) + n H(+)(out). Its function is as follows. NDH shuttles electrons from NAD(P)H:plastoquinone, via FMN and iron-sulfur (Fe-S) centers, to quinones in the photosynthetic chain and possibly in a chloroplast respiratory chain. The immediate electron acceptor for the enzyme in this species is believed to be plastoquinone. Couples the redox reaction to proton translocation, and thus conserves the redox energy in a proton gradient. In Eucalyptus globulus subsp. globulus (Tasmanian blue gum), this protein is NAD(P)H-quinone oxidoreductase subunit K, chloroplastic.